The chain runs to 190 residues: Selenoprotein S (190 aa).

A helical membrane pass occupies residues 28 to 48; that stretch reads SLLATYGWYIVFCCILLYVVF. The tract at residues 78 to 90 is VCP/p97-interacting motif (VIM); that stretch reads RQEALAAARLKMQ. Basic and acidic residues predominate over residues 115-138; it reads KIERWDSVQEGRSYRGDARKRQEE. Positions 115–190 are disordered; sequence KIERWDSVQE…RRGPSSGGUG (76 aa). Position 140 is a phosphoserine (S140). A compositionally biased stretch (gly residues) spans 160–174; that stretch reads RGGGYNPLSGEGGGA. Position 189 (U189) is a non-standard amino acid, selenocysteine.

Belongs to the selenoprotein S family. Interacts with DERL1 and (via VIM motif) with VCP, suggesting that it forms a membrane complex with DERL1 that serves as a receptor for VCP. Also interacts with DERL2, DERL3 and SELENOK. The SELENOK-SELENOS complex interacts with VCP. Post-translationally, truncated SELENOS proteins produced by failed UGA/Sec decoding are ubiquitinated by the CRL2(KLHDC2) and CRL2(KLHDC3) complexes, which recognizes the glycine (Gly) at the C-terminus of truncated SELENOS proteins. Truncated SELENOS proteins produced by failed UGA/Sec decoding are also ubiquitinated by the CRL5(KLHDC1) complex. Ubiquitously expressed. Highest expression in liver and lung, with lower levels detected in spleen, kidney, brain, lymph nodes, small intestine, stomach and heart. Very low expression detected in longissimus dorsi.

Its subcellular location is the cytoplasm. It localises to the endoplasmic reticulum membrane. Involved in the degradation process of misfolded endoplasmic reticulum (ER) luminal proteins. Participates in the transfer of misfolded proteins from the ER to the cytosol, where they are destroyed by the proteasome in a ubiquitin-dependent manner. Probably acts by serving as a linker between DERL1, which mediates the retrotranslocation of misfolded proteins into the cytosol, and the ATPase complex VCP, which mediates the translocation and ubiquitination. This chain is Selenoprotein S, found in Sus scrofa (Pig).